We begin with the raw amino-acid sequence, 236 residues long: MMWKLIIVTILAVGVLCDDIATAVNEQTTQQIRDTLKAQCKKNGAEDKAQDVENAAKNFVECVKGLFDFSTIKKEIEDAKPNGALDEVFGKYCAKSPQLKTCIHTLTTSATPCLEASVREQVGPINNGADQLIDFICYKDGDRIALFIAEGGPECFQEKSEGIRACAEKLKNNVGSVEAAQSLTLVEQCGKYDELTACIIKSLEECSTPTPGNMAESLFRFVRKGSPCNKAAPLKN.

The signal sequence occupies residues 1–17; it reads MMWKLIIVTILAVGVLC.

Monomer. As to expression, hemolymph.

It localises to the secreted. In Galleria mellonella (Greater wax moth), this protein is 27 kDa hemolymph protein.